We begin with the raw amino-acid sequence, 516 residues long: Protein DML1 (516 aa).

It belongs to the misato family.

The protein localises to the mitochondrion. In terms of biological role, involved in the partitioning of the mitochondrial organelle and mitochondrial DNA (mtDNA) inheritance. The protein is Protein DML1 (DML1) of Coccidioides immitis (strain RS) (Valley fever fungus).